The sequence spans 442 residues: uncharacterized protein (442 aa).

The N-terminal stretch at 1-23 is a signal peptide; sequence MEILLIVLGAVVAGLLCPVQTAA. Disordered stretches follow at residues 36 to 67 and 91 to 115; these read TSIS…NSSD and ANET…TNTR. Low complexity predominate over residues 48–67; sequence TSSGELSQSTFSSSSTNSSD. Asn64, Asn92, Asn99, Asn130, Asn174, Asn225, Asn244, Asn346, Asn363, Asn386, and Asn398 each carry an N-linked (GlcNAc...) asparagine glycan.

The protein resides in the secreted. This is an uncharacterized protein from Arthroderma benhamiae (strain ATCC MYA-4681 / CBS 112371) (Trichophyton mentagrophytes).